The following is a 119-amino-acid chain: Divalent-cation tolerance protein CutA (119 aa).

Residues cysteine 23, histidine 90, and histidine 91 each contribute to the Cu cation site.

The protein belongs to the CutA family. As to quaternary structure, homotrimer. Cu cation serves as cofactor.

The protein localises to the cytoplasm. Its function is as follows. Involved in resistance toward heavy metals. This chain is Divalent-cation tolerance protein CutA, found in Yersinia pseudotuberculosis serotype O:1b (strain IP 31758).